We begin with the raw amino-acid sequence, 440 residues long: Xylose isomerase (440 aa).

Catalysis depends on residues histidine 100 and aspartate 103. Glutamate 231, glutamate 267, histidine 270, aspartate 295, aspartate 306, aspartate 308, and aspartate 338 together coordinate Mg(2+).

This sequence belongs to the xylose isomerase family. As to quaternary structure, homotetramer. The cofactor is Mg(2+).

The protein localises to the cytoplasm. It catalyses the reaction alpha-D-xylose = alpha-D-xylulofuranose. This Burkholderia cenocepacia (strain ATCC BAA-245 / DSM 16553 / LMG 16656 / NCTC 13227 / J2315 / CF5610) (Burkholderia cepacia (strain J2315)) protein is Xylose isomerase.